Here is a 520-residue protein sequence, read N- to C-terminus: MSFILVLCTVSSLFVGGGTGIFLYKKVSKKYIGDAKELAIRIVEEARKEGQAQKKEILLQGQNEIFNQKKEFEFDFKQREKELSIKDKKLQVQSERLEERLERAAEKEHEILKVEKELSIKERNLLTLEEQLKSRIDEQEKQLQKISGLTVEEAKQSLFEEVKNRSRHESAKMMRLIEAEAVETANRKAKEIIANAIQRYAGDYVSEHTVTAVTLPSEDMKGRIIGREGRNIRALESATGVDFIIDDTPETVVLSAYSPMRRQVAKMALERLIQDGRIHPARIEEIVRKCEEDLAIQVREIGEQATFDIGVYGIHPELIRILGQLNYRTSYTQNVLRHSIEVASLCGMMAAELGVDIKKAKRAGLLHDIGKAVDHEVEGSHAIIGAELAKKFNETEEIVHAIEAHHEEKGKPETALAILVQASDCLSGARPGARLELLESYVKRLEHLENIAGEFEGVSKAYAIQAGREVRVMVDADSIGDDQTYLLCKDIAGRIEESLTYPGQIRVTVIREHRAVGYAK.

A helical membrane pass occupies residues 3–23; the sequence is FILVLCTVSSLFVGGGTGIFL. One can recognise a KH domain in the interval 209–272; that stretch reads TVTAVTLPSE…QVAKMALERL (64 aa). In terms of domain architecture, HD spans 335-429; that stretch reads VLRHSIEVAS…VQASDCLSGA (95 aa).

Belongs to the RNase Y family.

Its subcellular location is the cell membrane. Functionally, endoribonuclease that initiates mRNA decay. The protein is Ribonuclease Y of Lawsonia intracellularis (strain PHE/MN1-00).